The chain runs to 266 residues: Ribosomal RNA small subunit methyltransferase A (266 aa).

S-adenosyl-L-methionine is bound by residues Asn12, Leu14, Gly39, Glu61, Asp87, and Asn107.

Belongs to the class I-like SAM-binding methyltransferase superfamily. rRNA adenine N(6)-methyltransferase family. RsmA subfamily.

The protein localises to the cytoplasm. The enzyme catalyses adenosine(1518)/adenosine(1519) in 16S rRNA + 4 S-adenosyl-L-methionine = N(6)-dimethyladenosine(1518)/N(6)-dimethyladenosine(1519) in 16S rRNA + 4 S-adenosyl-L-homocysteine + 4 H(+). Functionally, specifically dimethylates two adjacent adenosines (A1518 and A1519) in the loop of a conserved hairpin near the 3'-end of 16S rRNA in the 30S particle. May play a critical role in biogenesis of 30S subunits. The sequence is that of Ribosomal RNA small subunit methyltransferase A from Nitratidesulfovibrio vulgaris (strain DP4) (Desulfovibrio vulgaris).